A 687-amino-acid polypeptide reads, in one-letter code: E3 ubiquitin-protein ligase RNF19B (687 aa).

The required for ubiquitin ligase activity and for protection against staurosporin-induced cell death stretch occupies residues 1 to 294; the sequence is MRLRNDCLVR…VCGCEFCWLC (294 aa). The tract at residues 53–88 is disordered; it reads RTRAAPEPSVPSPPPSPPPPPPPPVSVPPPPSSPGG. The segment covering 60–85 has biased composition (pro residues); that stretch reads PSVPSPPPSPPPPPPPPVSVPPPPSS. The TRIAD supradomain stretch occupies residues 91–313; it reads SLIECPLCLV…LSPSGCTFWG (223 aa). Residues C95, C98, C118, C121, C182, C187, C204, C209, C214, C217, H222, C227, C263, and C266 each contribute to the Zn(2+) site. The RING-type 1 zinc finger occupies 95–144; sequence CPLCLVRQPPEEIPELLSCRHRSCLRCLRQYLRIEICESRVNLRCPECAE. Residues 161–227 form an IBR-type zinc finger; sequence TRKYEEFLLR…KHVWHPNQTC (67 aa). The RING-type 2; atypical zinc finger occupies 263 to 294; the sequence is CPRCSAYIIKMNDGSCNHMTCSVCGCEFCWLC. Residue C278 is part of the active site. Zn(2+) is bound by residues C283, C286, C291, C294, H302, and C309. The next 2 membrane-spanning stretches (helical) occupy residues 330–350 and 391–411; these read LIGA…AMVI and VVAA…VYGV. The tract at residues 618–662 is disordered; sequence SIRSDLESSDAQSDDVPDLASEEYDSPHLFPPSPSNALQESPPHR. Residues 629–641 are compositionally biased toward acidic residues; the sequence is QSDDVPDLASEEY.

It belongs to the RBR family. RNF19 subfamily. As to quaternary structure, interacts with UBE2L3, UBE2L6 and UCKL1.

The protein localises to the cytoplasmic granule membrane. It is found in the endoplasmic reticulum membrane. The enzyme catalyses [E2 ubiquitin-conjugating enzyme]-S-ubiquitinyl-L-cysteine + [acceptor protein]-L-lysine = [E2 ubiquitin-conjugating enzyme]-L-cysteine + [acceptor protein]-N(6)-ubiquitinyl-L-lysine.. It functions in the pathway protein modification; protein ubiquitination. Its function is as follows. E3 ubiquitin-protein ligase which accepts ubiquitin from E2 ubiquitin-conjugating enzymes UBE2L3 and UBE2L6 in the form of a thioester and then directly transfers the ubiquitin to targeted substrates, such as UCKL1. Involved in the cytolytic activity of natural killer cells and cytotoxic T-cells. Protects against staurosporin-induced cell death. The polypeptide is E3 ubiquitin-protein ligase RNF19B (rnf19b) (Xenopus laevis (African clawed frog)).